The primary structure comprises 392 residues: Phospho-N-acetylmuramoyl-pentapeptide-transferase (392 aa).

11 helical membrane passes run tyrosine 24–glycine 44, threonine 76–leucine 96, phenylalanine 100–tryptophan 120, tyrosine 137–glutamate 157, phenylalanine 167–valine 187, valine 193–serine 213, glycine 225–threonine 245, serine 262–phenylalanine 282, valine 289–isoleucine 309, isoleucine 314–valine 334, and glutamine 369–leucine 389.

It belongs to the glycosyltransferase 4 family. MraY subfamily. It depends on Mg(2+) as a cofactor.

It localises to the cell inner membrane. It carries out the reaction UDP-N-acetyl-alpha-D-muramoyl-L-alanyl-gamma-D-glutamyl-meso-2,6-diaminopimeloyl-D-alanyl-D-alanine + di-trans,octa-cis-undecaprenyl phosphate = di-trans,octa-cis-undecaprenyl diphospho-N-acetyl-alpha-D-muramoyl-L-alanyl-D-glutamyl-meso-2,6-diaminopimeloyl-D-alanyl-D-alanine + UMP. It functions in the pathway cell wall biogenesis; peptidoglycan biosynthesis. Its function is as follows. Catalyzes the initial step of the lipid cycle reactions in the biosynthesis of the cell wall peptidoglycan: transfers peptidoglycan precursor phospho-MurNAc-pentapeptide from UDP-MurNAc-pentapeptide onto the lipid carrier undecaprenyl phosphate, yielding undecaprenyl-pyrophosphoryl-MurNAc-pentapeptide, known as lipid I. This is Phospho-N-acetylmuramoyl-pentapeptide-transferase from Acidovorax ebreus (strain TPSY) (Diaphorobacter sp. (strain TPSY)).